The chain runs to 47 residues: Exoenzymes regulatory protein AepH (47 aa).

Basic and acidic residues-rich tracts occupy residues 1–17 (MGQEPKGIESRKIQDGH) and 33–47 (TKKEKFSRMSRDANV). The interval 1-47 (MGQEPKGIESRKIQDGHVRKKVGRQQGLWVRTTKKEKFSRMSRDANV) is disordered.

Functionally, involved in the control of extracellular enzymes production. Stimulates PEL, PEH, CEL, and PRT production. The polypeptide is Exoenzymes regulatory protein AepH (aepH) (Pectobacterium carotovorum subsp. carotovorum (Erwinia carotovora subsp. carotovora)).